Consider the following 274-residue polypeptide: Large ribosomal subunit protein uL2 (274 aa).

Disordered regions lie at residues 30 to 54 (EKSL…IRHK) and 223 to 274 (VAMN…QLKG). Over residues 36–48 (GKKSSGGRNNNGR) the composition is skewed to low complexity. The segment covering 263 to 274 (KFSDKYIKQLKG) has biased composition (basic and acidic residues).

Belongs to the universal ribosomal protein uL2 family. As to quaternary structure, part of the 50S ribosomal subunit. Forms a bridge to the 30S subunit in the 70S ribosome.

In terms of biological role, one of the primary rRNA binding proteins. Required for association of the 30S and 50S subunits to form the 70S ribosome, for tRNA binding and peptide bond formation. It has been suggested to have peptidyltransferase activity; this is somewhat controversial. Makes several contacts with the 16S rRNA in the 70S ribosome. The protein is Large ribosomal subunit protein uL2 of Wolbachia sp. subsp. Brugia malayi (strain TRS).